The following is a 1066-amino-acid chain: DNA-directed RNA polymerase subunit beta (1066 aa).

This sequence belongs to the RNA polymerase beta chain family. In plastids the minimal PEP RNA polymerase catalytic core is composed of four subunits: alpha, beta, beta', and beta''. When a (nuclear-encoded) sigma factor is associated with the core the holoenzyme is formed, which can initiate transcription.

It is found in the plastid. The protein resides in the chloroplast. The enzyme catalyses RNA(n) + a ribonucleoside 5'-triphosphate = RNA(n+1) + diphosphate. DNA-dependent RNA polymerase catalyzes the transcription of DNA into RNA using the four ribonucleoside triphosphates as substrates. The protein is DNA-directed RNA polymerase subunit beta of Coffea arabica (Arabian coffee).